We begin with the raw amino-acid sequence, 345 residues long: Phenylalanine--tRNA ligase alpha subunit (345 aa).

Glu-259 lines the Mg(2+) pocket.

It belongs to the class-II aminoacyl-tRNA synthetase family. Phe-tRNA synthetase alpha subunit type 1 subfamily. In terms of assembly, tetramer of two alpha and two beta subunits. Mg(2+) serves as cofactor.

The protein resides in the cytoplasm. It catalyses the reaction tRNA(Phe) + L-phenylalanine + ATP = L-phenylalanyl-tRNA(Phe) + AMP + diphosphate + H(+). This is Phenylalanine--tRNA ligase alpha subunit from Nitrosomonas europaea (strain ATCC 19718 / CIP 103999 / KCTC 2705 / NBRC 14298).